Reading from the N-terminus, the 168-residue chain is Thioredoxin Y, chloroplastic (168 aa).

Residues 1–58 (MAAFTSTTTAAAASPTPCRPAALVARSSAAPLRSAAPVVVAAGLRRAAAPSRRGATLR) constitute a chloroplast transit peptide. Residues 59 to 165 (VQAKKQTFSS…LIQQIESALE (107 aa)) form the Thioredoxin domain. Residues Cys89 and Cys92 each act as nucleophile in the active site. Cys89 and Cys92 are disulfide-bonded.

Belongs to the thioredoxin family. Plant Y-type subfamily.

Its subcellular location is the plastid. The protein localises to the chloroplast. Functionally, probable thiol-disulfide oxidoreductase that may participate in various redox reactions. The sequence is that of Thioredoxin Y, chloroplastic from Oryza sativa subsp. japonica (Rice).